The sequence spans 778 residues: LPS-assembly protein LptD (778 aa).

Residues 1–23 form the signal peptide; the sequence is MKTRYSVLSVAMTAAFYTQYAQA.

Belongs to the LptD family. In terms of assembly, component of the lipopolysaccharide transport and assembly complex. Interacts with LptE and LptA.

Its subcellular location is the cell outer membrane. Together with LptE, is involved in the assembly of lipopolysaccharide (LPS) at the surface of the outer membrane. This is LPS-assembly protein LptD from Actinobacillus pleuropneumoniae serotype 7 (strain AP76).